The chain runs to 160 residues: Ribosomal RNA large subunit methyltransferase H (160 aa).

Position 108 (G108) interacts with S-adenosyl-L-methionine.

The protein belongs to the RNA methyltransferase RlmH family. In terms of assembly, homodimer.

It localises to the cytoplasm. It catalyses the reaction pseudouridine(1915) in 23S rRNA + S-adenosyl-L-methionine = N(3)-methylpseudouridine(1915) in 23S rRNA + S-adenosyl-L-homocysteine + H(+). Specifically methylates the pseudouridine at position 1915 (m3Psi1915) in 23S rRNA. This chain is Ribosomal RNA large subunit methyltransferase H, found in Rhodopseudomonas palustris (strain BisA53).